Here is a 294-residue protein sequence, read N- to C-terminus: DEP domain-containing protein 4 (294 aa).

Residues 71 to 162 enclose the DEP domain; the sequence is LQAQVEIKRR…SNISLYRFLG (92 aa).

The protein is DEP domain-containing protein 4 (DEPDC4) of Homo sapiens (Human).